The following is a 165-amino-acid chain: Methylated-DNA--protein-cysteine methyltransferase (165 aa).

Catalysis depends on C126, which acts as the Nucleophile; methyl group acceptor.

This sequence belongs to the MGMT family.

Its subcellular location is the cytoplasm. It carries out the reaction a 6-O-methyl-2'-deoxyguanosine in DNA + L-cysteinyl-[protein] = S-methyl-L-cysteinyl-[protein] + a 2'-deoxyguanosine in DNA. The catalysed reaction is a 4-O-methyl-thymidine in DNA + L-cysteinyl-[protein] = a thymidine in DNA + S-methyl-L-cysteinyl-[protein]. Functionally, involved in the cellular defense against the biological effects of O6-methylguanine (O6-MeG) and O4-methylthymine (O4-MeT) in DNA. Repairs the methylated nucleobase in DNA by stoichiometrically transferring the methyl group to a cysteine residue in the enzyme. This is a suicide reaction: the enzyme is irreversibly inactivated. In Mycobacterium leprae (strain TN), this protein is Methylated-DNA--protein-cysteine methyltransferase.